Reading from the N-terminus, the 191-residue chain is GTP-binding protein CIN4 (191 aa).

Residues 23–30 (GLDNSGKS), 69–73 (DIGGQ), and 131–134 (NKID) contribute to the GTP site.

Functionally, implicated in yeast microtubule function. The polypeptide is GTP-binding protein CIN4 (CIN4) (Saccharomyces cerevisiae (strain ATCC 204508 / S288c) (Baker's yeast)).